A 507-amino-acid chain; its full sequence is Interleukin-17 receptor E-like protein (507 aa).

A signal peptide spans 1–21 (MLAGQALAFLGLTWGTFQSLA).

The protein resides in the secreted. The polypeptide is Interleukin-17 receptor E-like protein (Homo sapiens (Human)).